The primary structure comprises 101 residues: UPF0235 protein MmarC6_1603 (101 aa).

This sequence belongs to the UPF0235 family.

This Methanococcus maripaludis (strain C6 / ATCC BAA-1332) protein is UPF0235 protein MmarC6_1603.